The primary structure comprises 180 residues: Large ribosomal subunit protein uL5 (180 aa).

The protein belongs to the universal ribosomal protein uL5 family. Part of the 50S ribosomal subunit; part of the 5S rRNA/L5/L18/L25 subcomplex. Contacts the 5S rRNA and the P site tRNA. Forms a bridge to the 30S subunit in the 70S ribosome.

In terms of biological role, this is one of the proteins that bind and probably mediate the attachment of the 5S RNA into the large ribosomal subunit, where it forms part of the central protuberance. In the 70S ribosome it contacts protein S13 of the 30S subunit (bridge B1b), connecting the 2 subunits; this bridge is implicated in subunit movement. Contacts the P site tRNA; the 5S rRNA and some of its associated proteins might help stabilize positioning of ribosome-bound tRNAs. The polypeptide is Large ribosomal subunit protein uL5 (Gloeothece citriformis (strain PCC 7424) (Cyanothece sp. (strain PCC 7424))).